A 427-amino-acid polypeptide reads, in one-letter code: MLISTFIISSLLSIALANPIPSRGGTQFYKRGDYWDYQNDKIRGVNLGGWFVLEPFITPSLFEAFENQGQDVPVDEYHYTKALGKDLAKERLDQHWSSWIVEADFQSIAGAGLNFVRIPIGYWAFQLLDNDPYVQGQESYLDQALEWAKKYDIKVWIDLHGAPGSQNGFDNSGLRDSYEFQNGDNTQVALDVLQYISNKYGGSDYGDVVIGIELLNEPLGSVLDMGKLNDFWQQGYHNLRNTGSSQNVIIHDAFQTWDSFNDKFHTPDYWNVVIDHHHYQVFSPGELSRSVDEHVKVACEWGANSTKENHWNLCGEWSAAMTDCTKWLNGVGRGSRYDQTFDYDPSQNQNYIGSCQGSQDISTWDDDKKSNYRRYIEAQLDAFEKRSGWIFWTWKTETTLEWDFQKLSYYGIFPSPLTSRQYPGQCD.

An N-terminal signal peptide occupies residues 1-17; sequence MLISTFIISSLLSIALA. The Proton donor role is filled by Glu-217. 2 disulfides stabilise this stretch: Cys-299–Cys-426 and Cys-324–Cys-355. Glu-316 serves as the catalytic Nucleophile.

It belongs to the glycosyl hydrolase 5 (cellulase A) family.

It localises to the secreted. The catalysed reaction is Successive hydrolysis of beta-D-glucose units from the non-reducing ends of (1-&gt;3)-beta-D-glucans, releasing alpha-glucose.. Functionally, beta-glucanases participate in the metabolism of beta-glucan, the main structural component of the cell wall. It could also function biosynthetically as a transglycosylase. In Wickerhamomyces anomalus (Yeast), this protein is Glucan 1,3-beta-glucosidase 2 (EXG2).